A 951-amino-acid chain; its full sequence is Leucine-rich repeat-containing G-protein coupled receptor 4 (951 aa).

An N-terminal signal peptide occupies residues methionine 1 to alanine 24. In terms of domain architecture, LRRNT spans alanine 25–alanine 57. Residues alanine 25–threonine 544 are Extracellular-facing. Disulfide bonds link cysteine 29-cysteine 35 and cysteine 33-cysteine 43. LRR repeat units follow at residues phenylalanine 58–serine 79, phenylalanine 82–glycine 103, glutamate 106–glycine 127, alanine 130–glycine 151, glutamine 154–proline 177, threonine 178–asparagine 199, serine 202–glycine 223, asparagine 226–leucine 247, serine 249–glycine 270, and leucine 273–asparagine 294. Asparagine 68 carries N-linked (GlcNAc...) asparagine glycosylation. N-linked (GlcNAc...) asparagine glycans are attached at residues asparagine 188 and asparagine 199. N-linked (GlcNAc...) asparagine glycans are attached at residues asparagine 294 and asparagine 314. LRR repeat units follow at residues histidine 320 to asparagine 341, methionine 344 to arginine 365, alanine 366 to glycine 387, serine 390 to lysine 411, and threonine 414 to glycine 435. An intrachain disulfide couples cysteine 339 to cysteine 364. 2 cysteine pairs are disulfide-bonded: cysteine 470–cysteine 522 and cysteine 471–cysteine 476. An N-linked (GlcNAc...) asparagine glycan is attached at asparagine 505. The chain crosses the membrane as a helical span at residues valine 545–alanine 565. Residues serine 566–leucine 575 lie on the Cytoplasmic side of the membrane. The helical transmembrane segment at phenylalanine 576–phenylalanine 596 threads the bilayer. The Extracellular segment spans residues leucine 597–lysine 619. Cysteine 618 and cysteine 693 are disulfide-bonded. The chain crosses the membrane as a helical span at residues valine 620 to alanine 640. The Cytoplasmic segment spans residues valine 641–glutamine 661. A helical membrane pass occupies residues phenylalanine 662–phenylalanine 682. The Extracellular portion of the chain corresponds to histidine 683 to serine 703. The helical transmembrane segment at leucine 704–isoleucine 724 threads the bilayer. The Cytoplasmic portion of the chain corresponds to tyrosine 725–asparagine 756. Residues cysteine 757–isoleucine 777 form a helical membrane-spanning segment. Residues serine 778 to lysine 783 are Extracellular-facing. Residues serine 784–phenylalanine 804 traverse the membrane as a helical segment. Over asparagine 805 to aspartate 951 the chain is Cytoplasmic. Serine 920 is subject to Phosphoserine.

The protein belongs to the G-protein coupled receptor 1 family.

The protein resides in the cell membrane. In terms of biological role, receptor for R-spondins that potentiates the canonical Wnt signaling pathway and is involved in the formation of various organs. Upon binding to R-spondins (RSPO1, RSPO2, RSPO3 or RSPO4), associates with phosphorylated LRP6 and frizzled receptors that are activated by extracellular Wnt receptors, triggering the canonical Wnt signaling pathway to increase expression of target genes. In contrast to classical G-protein coupled receptors, does not activate heterotrimeric G-proteins to transduce the signal. Its function as activator of the Wnt signaling pathway is required for the development of various organs, including liver, kidney, intestine, bone, reproductive tract and eye. May also act as a receptor for norrin (NDP), such results however require additional confirmation in vivo. Required during spermatogenesis to activate the Wnt signaling pathway in peritubular myoid cells. Required for the maintenance of intestinal stem cells and Paneth cell differentiation in postnatal intestinal crypts. Acts as a regulator of bone formation and remodeling. Involved in kidney development; required for maintaining the ureteric bud in an undifferentiated state. Involved in the development of the anterior segment of the eye. Required during erythropoiesis. Also acts as a negative regulator of innate immunity by inhibiting TLR2/TLR4 associated pattern-recognition and pro-inflammatory cytokine production. Plays an important role in regulating the circadian rhythms of plasma lipids, partially through regulating the rhythmic expression of MTTP. Required for proper development of GnRH neurons (gonadotropin-releasing hormone expressing neurons) that control the release of reproductive hormones from the pituitary gland. This chain is Leucine-rich repeat-containing G-protein coupled receptor 4 (Lgr4), found in Rattus norvegicus (Rat).